We begin with the raw amino-acid sequence, 196 residues long: Heat shock protein beta-8 (196 aa).

A phosphoserine mark is found at serine 24 and serine 57. At threonine 63 the chain carries Phosphothreonine; by PKC; in vitro. Asymmetric dimethylarginine is present on residues arginine 71 and arginine 78. The region spanning 74 to 185 (TATARFGVPA…TFGESSFNNE (112 aa)) is the sHSP domain. Residues 176-196 (TFGESSFNNELPQDSQEVTCT) are disordered. Over residues 177-196 (FGESSFNNELPQDSQEVTCT) the composition is skewed to polar residues.

The protein belongs to the small heat shock protein (HSP20) family. Monomer. Forms a ternary complex with BAG3 and HSPA1A. Component of the chaperone-assisted selective autophagy (CASA) complex consisting of BAG3, HSPA8/HSC70, HSPB8 and STUB1/CHIP. Interacts with HSPB1. Interacts with DNAJB6. Interacts with BAG3. As to expression, predominantly expressed in skeletal muscle and heart.

The protein localises to the cytoplasm. It localises to the nucleus. Involved in the chaperone-assisted selective autophagy (CASA), a crucial process for protein quality control, particularly in mechanical strained cells and tissues such as muscle. Displays temperature-dependent chaperone activity. The protein is Heat shock protein beta-8 (HSPB8) of Homo sapiens (Human).